We begin with the raw amino-acid sequence, 166 residues long: Cytochrome P450 regulator dap1 (166 aa).

A helical transmembrane segment spans residues 4 to 21; that stretch reads TQVVFIVTLFLYLLITRW. The Cytochrome b5 heme-binding domain maps to 42–145; sequence DYTPAELKEY…QKYQAVGRLI (104 aa). Position 108 is a phosphoserine (serine 108). Tyrosine 138 is a binding site for heme.

It belongs to the cytochrome b5 family. MAPR subfamily. Interacts with erg5 and erg11.

The protein resides in the endoplasmic reticulum. It is found in the membrane. In terms of biological role, required for sterol biosynthesis. Functions as a positive regulator of cytochrome P450 enzymes erg5 and erg11. Function requires bound heme. This Schizosaccharomyces pombe (strain 972 / ATCC 24843) (Fission yeast) protein is Cytochrome P450 regulator dap1 (dap1).